We begin with the raw amino-acid sequence, 267 residues long: Mediator of RNA polymerase II transcription subunit 18 (267 aa).

This sequence belongs to the Mediator complex subunit 18 family. Component of the Mediator complex.

It localises to the nucleus. Component of the Mediator complex, a coactivator involved in the regulated transcription of nearly all RNA polymerase II-dependent genes. Mediator functions as a bridge to convey information from gene-specific regulatory proteins to the basal RNA polymerase II transcription machinery. Mediator is recruited to promoters by direct interactions with regulatory proteins and serves as a scaffold for the assembly of a functional preinitiation complex with RNA polymerase II and the general transcription factors. This chain is Mediator of RNA polymerase II transcription subunit 18 (SRB5), found in Coccidioides immitis (strain RS) (Valley fever fungus).